The chain runs to 436 residues: ATP-dependent protease ATPase subunit HslU (436 aa).

Residues Ile19, 61 to 65 (GVGKT), Asp249, Glu314, and Arg386 contribute to the ATP site.

It belongs to the ClpX chaperone family. HslU subfamily. A double ring-shaped homohexamer of HslV is capped on each side by a ring-shaped HslU homohexamer. The assembly of the HslU/HslV complex is dependent on binding of ATP.

It localises to the cytoplasm. In terms of biological role, ATPase subunit of a proteasome-like degradation complex; this subunit has chaperone activity. The binding of ATP and its subsequent hydrolysis by HslU are essential for unfolding of protein substrates subsequently hydrolyzed by HslV. HslU recognizes the N-terminal part of its protein substrates and unfolds these before they are guided to HslV for hydrolysis. This Bartonella tribocorum (strain CIP 105476 / IBS 506) protein is ATP-dependent protease ATPase subunit HslU.